A 208-amino-acid chain; its full sequence is Protein DEHYDRATION-INDUCED 19 homolog 6 (208 aa).

Residues 151-190 form a disordered region; sequence VDSPRRSEADAEGHGSSSSDDQKRREQGVMDDASKEELEE. 2 stretches are compositionally biased toward basic and acidic residues: residues 153–163 and 170–190; these read SPRRSEADAEG and DDQK…ELEE.

It belongs to the Di19 family.

The chain is Protein DEHYDRATION-INDUCED 19 homolog 6 (DI19-6) from Oryza sativa subsp. japonica (Rice).